We begin with the raw amino-acid sequence, 123 residues long: uncharacterized protein (123 aa).

4 helical membrane passes run 9 to 31 (LLLRFTLEIAALISLGVYAWISF), 38 to 56 (VLTLVLPIAVMIVWSVFAV), 67 to 91 (VIAVNGVTRLVIELLIFAMAVAALY), and 98 to 114 (VSIVFLCLIILHYIISA).

The protein to E.coli YhgE.

It is found in the cell membrane. This is an uncharacterized protein from Bacillus subtilis (strain 168).